The primary structure comprises 382 residues: Toluene efflux pump periplasmic linker protein TtgD (382 aa).

An N-terminal signal peptide occupies residues 1–23 (MRLERALRARQLIPLAAIWLLVG). A lipid anchor (N-palmitoyl cysteine) is attached at Cys24. Cys24 is lipidated: S-diacylglycerol cysteine. Residues 100–136 (YEALLARAEASLLTAQNLARRYERLLDTNAISQQQYD) adopt a coiled-coil conformation.

The protein belongs to the membrane fusion protein (MFP) (TC 8.A.1) family.

Its subcellular location is the cell inner membrane. Functionally, the periplasmic linker protein component of an inducible organic solvent efflux pump. Involved in export of toluene and styrene but not of m-xylene, propylbenzene or ethylbenzene. Is not involved in antibiotic or AMP efflux. The protein is Toluene efflux pump periplasmic linker protein TtgD (ttgD) of Pseudomonas putida (strain DOT-T1E).